The chain runs to 256 residues: Protein FixA (256 aa).

This sequence belongs to the ETF beta-subunit/FixA family. Heterodimer of FixA and FixB.

It functions in the pathway amine and polyamine metabolism; carnitine metabolism. Functionally, required for anaerobic carnitine reduction. May bring reductant to CaiA. The protein is Protein FixA of Salmonella paratyphi A (strain ATCC 9150 / SARB42).